The chain runs to 122 residues: Phosphoribosyl-ATP pyrophosphatase (122 aa).

This sequence belongs to the PRA-PH family.

Its subcellular location is the cytoplasm. The catalysed reaction is 1-(5-phospho-beta-D-ribosyl)-ATP + H2O = 1-(5-phospho-beta-D-ribosyl)-5'-AMP + diphosphate + H(+). It participates in amino-acid biosynthesis; L-histidine biosynthesis; L-histidine from 5-phospho-alpha-D-ribose 1-diphosphate: step 2/9. This is Phosphoribosyl-ATP pyrophosphatase from Burkholderia thailandensis (strain ATCC 700388 / DSM 13276 / CCUG 48851 / CIP 106301 / E264).